A 217-amino-acid polypeptide reads, in one-letter code: 3,4-dihydroxy-2-butanone 4-phosphate synthase (217 aa).

D-ribulose 5-phosphate-binding positions include 37-38 (RE), Asp-42, 150-154 (RRGHT), and Glu-174. Glu-38 lines the Mg(2+) pocket. His-153 contacts Mg(2+).

The protein belongs to the DHBP synthase family. As to quaternary structure, homodimer. It depends on Mg(2+) as a cofactor. The cofactor is Mn(2+).

The catalysed reaction is D-ribulose 5-phosphate = (2S)-2-hydroxy-3-oxobutyl phosphate + formate + H(+). The protein operates within cofactor biosynthesis; riboflavin biosynthesis; 2-hydroxy-3-oxobutyl phosphate from D-ribulose 5-phosphate: step 1/1. Catalyzes the conversion of D-ribulose 5-phosphate to formate and 3,4-dihydroxy-2-butanone 4-phosphate. This Yersinia pseudotuberculosis serotype O:1b (strain IP 31758) protein is 3,4-dihydroxy-2-butanone 4-phosphate synthase.